A 100-amino-acid polypeptide reads, in one-letter code: Large ribosomal subunit protein bL21 (100 aa).

It belongs to the bacterial ribosomal protein bL21 family. Part of the 50S ribosomal subunit. Contacts protein L20.

Functionally, this protein binds to 23S rRNA in the presence of protein L20. The polypeptide is Large ribosomal subunit protein bL21 (Corynebacterium jeikeium (strain K411)).